The chain runs to 354 residues: UDP-N-acetylglucosamine--N-acetylmuramyl-(pentapeptide) pyrophosphoryl-undecaprenol N-acetylglucosamine transferase (354 aa).

UDP-N-acetyl-alpha-D-glucosamine is bound by residues 13–15 (SGG), Asn125, Ser189, Ile242, 261–266 (ALTVSE), and Gln286.

This sequence belongs to the glycosyltransferase 28 family. MurG subfamily.

It localises to the cell inner membrane. The catalysed reaction is di-trans,octa-cis-undecaprenyl diphospho-N-acetyl-alpha-D-muramoyl-L-alanyl-D-glutamyl-meso-2,6-diaminopimeloyl-D-alanyl-D-alanine + UDP-N-acetyl-alpha-D-glucosamine = di-trans,octa-cis-undecaprenyl diphospho-[N-acetyl-alpha-D-glucosaminyl-(1-&gt;4)]-N-acetyl-alpha-D-muramoyl-L-alanyl-D-glutamyl-meso-2,6-diaminopimeloyl-D-alanyl-D-alanine + UDP + H(+). It functions in the pathway cell wall biogenesis; peptidoglycan biosynthesis. Its function is as follows. Cell wall formation. Catalyzes the transfer of a GlcNAc subunit on undecaprenyl-pyrophosphoryl-MurNAc-pentapeptide (lipid intermediate I) to form undecaprenyl-pyrophosphoryl-MurNAc-(pentapeptide)GlcNAc (lipid intermediate II). The chain is UDP-N-acetylglucosamine--N-acetylmuramyl-(pentapeptide) pyrophosphoryl-undecaprenol N-acetylglucosamine transferase from Buchnera aphidicola subsp. Acyrthosiphon pisum (strain 5A).